Reading from the N-terminus, the 383-residue chain is 8-amino-7-oxononanoate synthase (383 aa).

A substrate-binding site is contributed by Arg-21. 108 to 109 contributes to the pyridoxal 5'-phosphate binding site; the sequence is GF. His-133 contributes to the substrate binding site. Pyridoxal 5'-phosphate-binding residues include Ser-179, His-207, and Thr-233. Position 236 is an N6-(pyridoxal phosphate)lysine (Lys-236). Thr-350 is a binding site for substrate.

This sequence belongs to the class-II pyridoxal-phosphate-dependent aminotransferase family. BioF subfamily. As to quaternary structure, homodimer. Pyridoxal 5'-phosphate is required as a cofactor.

It carries out the reaction 6-carboxyhexanoyl-[ACP] + L-alanine + H(+) = (8S)-8-amino-7-oxononanoate + holo-[ACP] + CO2. It participates in cofactor biosynthesis; biotin biosynthesis. Catalyzes the decarboxylative condensation of pimeloyl-[acyl-carrier protein] and L-alanine to produce 8-amino-7-oxononanoate (AON), [acyl-carrier protein], and carbon dioxide. The protein is 8-amino-7-oxononanoate synthase of Cronobacter sakazakii (strain ATCC BAA-894) (Enterobacter sakazakii).